Consider the following 387-residue polypeptide: Anhydro-N-acetylmuramic acid kinase (387 aa).

Position 17–24 (17–24 (GTSMDGVD)) interacts with ATP.

Belongs to the anhydro-N-acetylmuramic acid kinase family.

It catalyses the reaction 1,6-anhydro-N-acetyl-beta-muramate + ATP + H2O = N-acetyl-D-muramate 6-phosphate + ADP + H(+). Its pathway is amino-sugar metabolism; 1,6-anhydro-N-acetylmuramate degradation. The protein operates within cell wall biogenesis; peptidoglycan recycling. Its function is as follows. Catalyzes the specific phosphorylation of 1,6-anhydro-N-acetylmuramic acid (anhMurNAc) with the simultaneous cleavage of the 1,6-anhydro ring, generating MurNAc-6-P. Is required for the utilization of anhMurNAc either imported from the medium or derived from its own cell wall murein, and thus plays a role in cell wall recycling. The chain is Anhydro-N-acetylmuramic acid kinase from Burkholderia pseudomallei (strain 1710b).